We begin with the raw amino-acid sequence, 713 residues long: DNA polymerase eta (713 aa).

In terms of domain architecture, UmuC spans 9–259 (VALVDMDCFF…MPIRKIRSLG (251 aa)). The Mg(2+) site is built by aspartate 13 and methionine 14. Residues aspartate 13 and methionine 14 each coordinate Mn(2+). Arginine 61 serves as a coordination point for a 2'-deoxyribonucleoside 5'-triphosphate. Mg(2+)-binding residues include aspartate 115 and glutamate 116. 2 residues coordinate Mn(2+): aspartate 115 and glutamate 116. Disordered regions lie at residues 441–472 (TSFL…AVTA) and 495–527 (EASL…QSTG). Polar residues-rich tracts occupy residues 456-466 (VTSSEAKTQGS) and 497-527 (SLSS…QSTG). The UBZ3-type zinc finger occupies 628-662 (AAEDQVPCEKCGSLVPVWDMPEHMDYHFALELQKS). Cysteine 635, cysteine 638, histidine 650, and histidine 654 together coordinate Zn(2+). The disordered stretch occupies residues 677 to 705 (VSHQGKRNPKSPLACTNKRPRPEGMQTLE). Glycyl lysine isopeptide (Lys-Gly) (interchain with G-Cter in ubiquitin) cross-links involve residues lysine 682, lysine 686, and lysine 694. The PIP-box motif lies at 701 to 708 (MQTLESFF). A Glycyl lysine isopeptide (Lys-Gly) (interchain with G-Cter in ubiquitin) cross-link involves residue lysine 709.

This sequence belongs to the DNA polymerase type-Y family. In terms of assembly, interacts with REV1. Interacts with monoubiquitinated PCNA, but not unmodified PCNA. Interacts with POLI; this interaction targets POLI to the replication machinery. Interacts with PALB2 and BRCA2; the interactions are direct and are required to sustain the recruitment of POLH at blocked replication forks and to stimulate POLH-dependent DNA synthesis on D loop substrates. Interacts (via C-terminus) with TRAIP. Interacts with ubiquitin. Interacts with POLDIP2. Requires Mg(2+) as cofactor. Mn(2+) serves as cofactor. Monoubiquitinated by RCHY1/PIRH2. Ubiquitination depends on integrity of the UBZ3-type zinc finger domain and is enhanced by TRAIP. Ubiquitination inhibits the ability of PolH to interact with PCNA and to bypass UV-induced lesions.

It is found in the nucleus. The catalysed reaction is DNA(n) + a 2'-deoxyribonucleoside 5'-triphosphate = DNA(n+1) + diphosphate. The enzyme in complex with the DNA substrate binds a third divalent metal cation. The binding of this third divalent cation, which is coordinated by water molecules and two oxygen atoms from DNA and dNTP, is essential for catalyzing the DNA synthesis. In terms of biological role, DNA polymerase specifically involved in the DNA repair by translesion synthesis (TLS). Due to low processivity on both damaged and normal DNA, cooperates with the heterotetrameric (REV3L, REV7, POLD2 and POLD3) POLZ complex for complete bypass of DNA lesions. Inserts one or 2 nucleotide(s) opposite the lesion, the primer is further extended by the tetrameric POLZ complex. In the case of 1,2-intrastrand d(GpG)-cisplatin cross-link, inserts dCTP opposite the 3' guanine. Particularly important for the repair of UV-induced pyrimidine dimers. Although inserts the correct base, may cause base transitions and transversions depending upon the context. May play a role in hypermutation at immunoglobulin genes. Forms a Schiff base with 5'-deoxyribose phosphate at abasic sites, but does not have any lyase activity, preventing the release of the 5'-deoxyribose phosphate (5'-dRP) residue. This covalent trapping of the enzyme by the 5'-dRP residue inhibits its DNA synthetic activity during base excision repair, thereby avoiding high incidence of mutagenesis. Targets POLI to replication foci. The chain is DNA polymerase eta (POLH) from Homo sapiens (Human).